Consider the following 444-residue polypeptide: Tubulin beta-8 chain (444 aa).

Residues 1–4 (MREI) carry the MREI motif motif. 6 residues coordinate GTP: Q11, E69, S138, G142, T143, and G144. E69 provides a ligand contact to Mg(2+). S172 is subject to Phosphoserine; by CDK1. Residues N204 and N226 each contribute to the GTP site. E436 carries the 5-glutamyl polyglutamate modification.

The protein belongs to the tubulin family. As to quaternary structure, dimer of alpha and beta chains. A typical microtubule is a hollow water-filled tube with an outer diameter of 25 nm and an inner diameter of 15 nM. Alpha-beta heterodimers associate head-to-tail to form protofilaments running lengthwise along the microtubule wall with the beta-tubulin subunit facing the microtubule plus end conferring a structural polarity. Microtubules usually have 13 protofilaments but different protofilament numbers can be found in some organisms and specialized cells. It depends on Mg(2+) as a cofactor. Post-translationally, some glutamate residues at the C-terminus are polyglycylated, resulting in polyglycine chains on the gamma-carboxyl group. Glycylation is mainly limited to tubulin incorporated into axonemes (cilia and flagella) whereas glutamylation is prevalent in neuronal cells, centrioles, axonemes, and the mitotic spindle. Both modifications can coexist on the same protein on adjacent residues, and lowering polyglycylation levels increases polyglutamylation, and reciprocally. Cilia and flagella glycylation is required for their stability and maintenance. Flagella glycylation controls sperm motility. In terms of processing, some glutamate residues at the C-terminus are polyglutamylated, resulting in polyglutamate chains on the gamma-carboxyl group. Polyglutamylation plays a key role in microtubule severing by spastin (SPAST). SPAST preferentially recognizes and acts on microtubules decorated with short polyglutamate tails: severing activity by SPAST increases as the number of glutamates per tubulin rises from one to eight, but decreases beyond this glutamylation threshold. Glutamylation is also involved in cilia motility. Phosphorylated on Ser-172 by CDK1 during the cell cycle, from metaphase to telophase, but not in interphase. This phosphorylation inhibits tubulin incorporation into microtubules.

It is found in the cytoplasm. Its subcellular location is the cytoskeleton. It localises to the spindle. In terms of biological role, tubulin is the major constituent of microtubules, a cylinder consisting of laterally associated linear protofilaments composed of alpha- and beta-tubulin heterodimers. Microtubules grow by the addition of GTP-tubulin dimers to the microtubule end, where a stabilizing cap forms. Below the cap, tubulin dimers are in GDP-bound state, owing to GTPase activity of alpha-tubulin. Has a key role in meiotic spindle assembly and oocyte maturation. In Papio hamadryas (Hamadryas baboon), this protein is Tubulin beta-8 chain (TUBB8).